The sequence spans 365 residues: Outer membrane porin protein LC (365 aa).

Residues 1–23 form the signal peptide; the sequence is MKKLTVAISAVAASVLMAMSAQA.

This sequence belongs to the Gram-negative porin family. In terms of assembly, homotrimer.

The protein localises to the host cell outer membrane. Its function is as follows. Forms pores that allow passive diffusion of small molecules across the host cell outer membrane. The polypeptide is Outer membrane porin protein LC (LC) (Enterobacteria phage PA-2 (Bacteriophage PA-2)).